A 237-amino-acid polypeptide reads, in one-letter code: Ribosomal RNA small subunit methyltransferase G (237 aa).

Residues Gly-78, Phe-83, 129 to 130, and Arg-148 contribute to the S-adenosyl-L-methionine site; that span reads AE.

The protein belongs to the methyltransferase superfamily. RNA methyltransferase RsmG family.

It localises to the cytoplasm. In terms of biological role, specifically methylates the N7 position of a guanine in 16S rRNA. The chain is Ribosomal RNA small subunit methyltransferase G from Streptococcus pyogenes serotype M18 (strain MGAS8232).